The primary structure comprises 745 residues: Double-stranded RNA-specific editase B2 (745 aa).

Disordered stretches follow at residues 1–35 (MASV…RKDK) and 50–104 (SPGT…PLEE). Positions 20 to 34 (CKSKRRRRRRSKRKD) are enriched in basic residues. Residues 23–35 (KRRRRRRSKRKDK) are R-domain (ssRNA-binding). 2 consecutive DRBM domains span residues 125 to 191 (TPKN…SFVQ) and 283 to 347 (NPVV…ALFD). The A to I editase domain maps to 414–741 (VLSSGTKCIS…VRKPPEQDQF (328 aa)). Histidine 438 lines the Zn(2+) pocket. Glutamate 440 acts as the Proton donor in catalysis. The Zn(2+) site is built by cysteine 496 and cysteine 561.

Brain specific.

It localises to the nucleus. Lacks editing activity. It prevents the binding of other ADAR enzymes to targets in vitro, and decreases the efficiency of these enzymes. Capable of binding to dsRNA but also to ssRNA. This is Double-stranded RNA-specific editase B2 (Adarb2) from Mus musculus (Mouse).